We begin with the raw amino-acid sequence, 122 residues long: Small ribosomal subunit protein uS13 (122 aa).

The segment at 97–122 is disordered; the sequence is PVRGQRTHTNARTRKGPAKAIAGKKK.

It belongs to the universal ribosomal protein uS13 family. In terms of assembly, part of the 30S ribosomal subunit. Forms a loose heterodimer with protein S19. Forms two bridges to the 50S subunit in the 70S ribosome.

Functionally, located at the top of the head of the 30S subunit, it contacts several helices of the 16S rRNA. In the 70S ribosome it contacts the 23S rRNA (bridge B1a) and protein L5 of the 50S subunit (bridge B1b), connecting the 2 subunits; these bridges are implicated in subunit movement. Contacts the tRNAs in the A and P-sites. The protein is Small ribosomal subunit protein uS13 of Bartonella henselae (strain ATCC 49882 / DSM 28221 / CCUG 30454 / Houston 1) (Rochalimaea henselae).